The sequence spans 686 residues: XK-related protein 5 (686 aa).

Transmembrane regions (helical) follow at residues 33-53 (LLWG…QALS), 205-225 (HFWV…WLVA), 239-259 (LFNL…WDSP), 265-285 (VTFY…ATDF), and 297-317 (IAGV…YYSL). 3 disordered regions span residues 339 to 387 (GDKT…PPEA), 448 to 468 (ALSA…LENS), and 490 to 592 (FASD…APFP). Residues 340 to 359 (DKTERRDSPRATDLAGKRTE) are compositionally biased toward basic and acidic residues. Polar residues-rich tracts occupy residues 450–468 (SAQQ…LENS) and 490–509 (FASD…TQGE). Positions 523–536 (QGKGTGGQQRGGEG) are enriched in gly residues. Positions 550 to 567 (VATSSQQEGSPATLQTAH) are enriched in polar residues.

The protein belongs to the XK family.

It localises to the cell membrane. The polypeptide is XK-related protein 5 (Homo sapiens (Human)).